A 385-amino-acid polypeptide reads, in one-letter code: 8-amino-7-oxononanoate synthase (385 aa).

Arg23 contacts substrate. 110 to 111 (GF) contacts pyridoxal 5'-phosphate. Substrate is bound at residue His135. Pyridoxal 5'-phosphate is bound by residues Ser180, His208, and Thr234. The residue at position 237 (Lys237) is an N6-(pyridoxal phosphate)lysine. Thr350 lines the substrate pocket.

It belongs to the class-II pyridoxal-phosphate-dependent aminotransferase family. BioF subfamily. Homodimer. Pyridoxal 5'-phosphate serves as cofactor.

The catalysed reaction is 6-carboxyhexanoyl-[ACP] + L-alanine + H(+) = (8S)-8-amino-7-oxononanoate + holo-[ACP] + CO2. It participates in cofactor biosynthesis; biotin biosynthesis. In terms of biological role, catalyzes the decarboxylative condensation of pimeloyl-[acyl-carrier protein] and L-alanine to produce 8-amino-7-oxononanoate (AON), [acyl-carrier protein], and carbon dioxide. The sequence is that of 8-amino-7-oxononanoate synthase from Vibrio vulnificus (strain CMCP6).